We begin with the raw amino-acid sequence, 142 residues long: HTH-type transcriptional regulator LrpA1 (142 aa).

The region spanning 1–72 (MSTESTEERI…GQSIAMVGID (72 aa)) is the HTH asnC-type domain. The H-T-H motif DNA-binding region spans 22-41 (YAAIAERADVSKPTVRKYID).

Its function is as follows. Transcription factor that regulates genes involved in amino acid metabolism. Represses the aspB3 gene, coding for an aspartate transaminase, in the presence of L-aspartate. Another target gene is the basal transcriptional regulator tfbB. Also binds its own promoter. The chain is HTH-type transcriptional regulator LrpA1 (lrpA1) from Halobacterium salinarum (strain ATCC 29341 / DSM 671 / R1).